The chain runs to 168 residues: Monothiol glutaredoxin-S7, chloroplastic (168 aa).

Residues 1–54 (MAATAAASVAAISPLPGASLPRPVSARVPLLPRASPPTWRLSVGSARARSTRCL) constitute a chloroplast transit peptide. Residues 67–168 (RATLDKVVGS…QETLEKAMLS (102 aa)) enclose the Glutaredoxin domain. Lys-84 contacts glutathione. Cys-92 contacts [2Fe-2S] cluster. Glutathione-binding positions include Arg-121, Phe-133, and 146-147 (CD).

The protein belongs to the glutaredoxin family. CGFS subfamily.

The protein resides in the plastid. Its subcellular location is the chloroplast. Functionally, may only reduce GSH-thiol disulfides, but not protein disulfides. The polypeptide is Monothiol glutaredoxin-S7, chloroplastic (GRXS7) (Oryza sativa subsp. japonica (Rice)).